The primary structure comprises 129 residues: MAFDFPDQFRFADSHEYVRQEAELVRVGLSAYAVDQLGDIVFVDLPEVGDDLSRGTSFGTVESVKAVEEMYAPITGKVIQRNEAVLANPEELQNDPHGEGWLLVIRPSELAQIEELMDSATYSAKVAAA.

The region spanning 24 to 106 (LVRVGLSAYA…HGEGWLLVIR (83 aa)) is the Lipoyl-binding domain. Position 65 is an N6-lipoyllysine (Lys65).

This sequence belongs to the GcvH family. As to quaternary structure, the glycine cleavage system is composed of four proteins: P, T, L and H. It depends on (R)-lipoate as a cofactor.

The glycine cleavage system catalyzes the degradation of glycine. The H protein shuttles the methylamine group of glycine from the P protein to the T protein. In Synechococcus sp. (strain CC9311), this protein is Glycine cleavage system H protein.